The chain runs to 264 residues: Acyl-[acyl-carrier-protein]--UDP-N-acetylglucosamine O-acyltransferase (264 aa).

It belongs to the transferase hexapeptide repeat family. LpxA subfamily. As to quaternary structure, homotrimer.

It is found in the cytoplasm. The enzyme catalyses a (3R)-hydroxyacyl-[ACP] + UDP-N-acetyl-alpha-D-glucosamine = a UDP-3-O-[(3R)-3-hydroxyacyl]-N-acetyl-alpha-D-glucosamine + holo-[ACP]. Its pathway is glycolipid biosynthesis; lipid IV(A) biosynthesis; lipid IV(A) from (3R)-3-hydroxytetradecanoyl-[acyl-carrier-protein] and UDP-N-acetyl-alpha-D-glucosamine: step 1/6. Its function is as follows. Involved in the biosynthesis of lipid A, a phosphorylated glycolipid that anchors the lipopolysaccharide to the outer membrane of the cell. This is Acyl-[acyl-carrier-protein]--UDP-N-acetylglucosamine O-acyltransferase from Rickettsia felis (strain ATCC VR-1525 / URRWXCal2) (Rickettsia azadi).